We begin with the raw amino-acid sequence, 283 residues long: Zip homologous protein 4 (283 aa).

The RING-type zinc-finger motif lies at 6-50 (CFRCYKFPSKQIEFYLTNCMHMFCIECERLCHPPEEEPLKCIQCS). 2 disordered regions span residues 149 to 175 (KKQL…SSRS) and 201 to 283 (TKAQ…RNSQ). The span at 163-175 (PRSNSLKVASSRS) shows a compositional bias: polar residues. Residues 202–216 (KAQAKAEAEAEAPAK) show a composition bias toward low complexity. The span at 220-235 (SKAQTTKCTSNYQSHP) shows a compositional bias: polar residues. Over residues 267–283 (KKHEAQREKHKEHRNSQ) the composition is skewed to basic and acidic residues.

As to quaternary structure, interacts with zhp-3; the interaction is required for their localization along paired chromosomes and stability, and for the formation of chiasma during meiotic recombination. In terms of tissue distribution, expressed in the germline.

Its subcellular location is the chromosome. Functionally, recruited co-dependently with zhp-3 to the synaptonemal complex between homologous chromosome pairs to regulate the formation and number of crossover events between homologs during meiotic recombination. In the early stages of pachytene, in complex with zhp-4, recruited by the zhp-1-zhp-2 heterodimer to designated crossover sites along the recombination intermediate to stabilize other pro-crossover factors such as rmh-1, msh-5 and cosa-1. This in turn facilitates crossover and promotes the formation of chiasma in each meiotic nucleus at the late pachytene stage of meiosis. Negatively regulates double strand break formation to promote formation of the crossover intermediate. In Caenorhabditis elegans, this protein is Zip homologous protein 4.